The chain runs to 484 residues: Adenylosuccinate lyase (484 aa).

Ala2 carries the N-acetylalanine modification. Residues 20 to 21, 85 to 87, and 111 to 112 each bind substrate; these read RY, RHD, and TS. Position 147 is an N6-acetyllysine (Lys147). His159 serves as the catalytic Proton donor/acceptor. A substrate-binding site is contributed by Gln241. Ser289 functions as the Proton donor/acceptor in the catalytic mechanism. Lys295 carries the post-translational modification N6-acetyllysine. Arg303, Arg329, Ser334, and Arg338 together coordinate substrate. Residue Lys415 forms a Glycyl lysine isopeptide (Lys-Gly) (interchain with G-Cter in SUMO1) linkage.

This sequence belongs to the lyase 1 family. Adenylosuccinate lyase subfamily. In terms of assembly, homotetramer. Residues from neighboring subunits contribute catalytic and substrate-binding residues to each active site. In terms of tissue distribution, ubiquitously expressed. Both isoforms are produced by all tissues. Isoform 2 is 10-fold less abundant than isoform 1.

It carries out the reaction N(6)-(1,2-dicarboxyethyl)-AMP = fumarate + AMP. The catalysed reaction is (2S)-2-[5-amino-1-(5-phospho-beta-D-ribosyl)imidazole-4-carboxamido]succinate = 5-amino-1-(5-phospho-beta-D-ribosyl)imidazole-4-carboxamide + fumarate. Its pathway is purine metabolism; AMP biosynthesis via de novo pathway; AMP from IMP: step 2/2. It functions in the pathway purine metabolism; IMP biosynthesis via de novo pathway; 5-amino-1-(5-phospho-D-ribosyl)imidazole-4-carboxamide from 5-amino-1-(5-phospho-D-ribosyl)imidazole-4-carboxylate: step 2/2. The enzyme reaction kinetics indicate cooperativity between subunits. Its function is as follows. Catalyzes two non-sequential steps in de novo AMP synthesis: converts (S)-2-(5-amino-1-(5-phospho-D-ribosyl)imidazole-4-carboxamido)succinate (SAICAR) to fumarate plus 5-amino-1-(5-phospho-D-ribosyl)imidazole-4-carboxamide, and thereby also contributes to de novo IMP synthesis, and converts succinyladenosine monophosphate (SAMP) to AMP and fumarate. This Homo sapiens (Human) protein is Adenylosuccinate lyase (ADSL).